A 334-amino-acid polypeptide reads, in one-letter code: Oligopeptide transport ATP-binding protein OppF (334 aa).

The ABC transporter domain occupies 12-265; sequence LEIADLKVHF…PLHPYTKALM (254 aa). 57 to 64 contacts ATP; it reads GESGCGKS.

This sequence belongs to the ABC transporter superfamily. In terms of assembly, the complex is composed of two ATP-binding proteins (OppD and OppF), two transmembrane proteins (OppB and OppC) and a solute-binding protein (OppA).

The protein localises to the cell inner membrane. It catalyses the reaction a [peptide](out) + ATP + H2O = a [peptide](in) + ADP + phosphate + H(+). The enzyme catalyses L-alanyl-gamma-D-glutamyl-meso-2,6-diaminopimelate(out) + ATP + H2O = L-alanyl-gamma-D-glutamyl-meso-2,6-diaminopimelate(in) + ADP + phosphate + H(+). In terms of biological role, part of the ABC transporter complex OppABCDF involved in the uptake of oligopeptides, including the cell wall murein tripeptide L-alanyl-gamma-D-glutamyl-meso-diaminopimelate. Probably responsible for energy coupling to the transport system. Plays an important nutritional role and is involved in the recycling of cell wall peptides. The polypeptide is Oligopeptide transport ATP-binding protein OppF (Salmonella typhimurium (strain LT2 / SGSC1412 / ATCC 700720)).